A 308-amino-acid chain; its full sequence is MIIVTGGAGMIGANIVKALNDMGRKDILVVDNLKDGTKFINLVDLDIADYCDKEDFISSVIAGDDLGDIDAVFHEGACSATTEWDGKYLMHNNYEYSKELLHYCLDREIPFFYASSAATYGDKTDFIEEREFEGPLNAYGYSKFLFDQYVRAILPEANSPVCGFKYFNVYGPREQHKGSMASVAFHLNNQILKGENPKLFAGSEHFLRDFVYVGDVAEVNLWAWENGVSGIFNLGTGNAESFKAVAEAVVKFHGKGEIETIPFPDHLKSRYQEYTQANLTKLRAAGCDFKFKNVAEGVAEYMAWLNRK.

NADP(+)-binding positions include 10–11 (MI), 31–32 (DN), Lys-38, Lys-53, 75–79 (EGACS), and Asn-92. Residue Tyr-139 is the Proton acceptor of the active site. NADP(+) is bound at residue Lys-143. Asn-168 is a binding site for substrate. The NADP(+) site is built by Val-169 and Lys-177. Catalysis depends on Lys-177, which acts as the Proton acceptor. Residues Ser-179, His-186, 200 to 203 (FAGS), Arg-208, and Tyr-271 contribute to the substrate site.

It belongs to the NAD(P)-dependent epimerase/dehydratase family. HldD subfamily. Homopentamer. NADP(+) serves as cofactor.

The enzyme catalyses ADP-D-glycero-beta-D-manno-heptose = ADP-L-glycero-beta-D-manno-heptose. Its pathway is nucleotide-sugar biosynthesis; ADP-L-glycero-beta-D-manno-heptose biosynthesis; ADP-L-glycero-beta-D-manno-heptose from D-glycero-beta-D-manno-heptose 7-phosphate: step 4/4. Its function is as follows. Catalyzes the interconversion between ADP-D-glycero-beta-D-manno-heptose and ADP-L-glycero-beta-D-manno-heptose via an epimerization at carbon 6 of the heptose. The polypeptide is ADP-L-glycero-D-manno-heptose-6-epimerase (Mannheimia succiniciproducens (strain KCTC 0769BP / MBEL55E)).